Consider the following 276-residue polypeptide: Polyamine aminopropyltransferase (276 aa).

Residues 3–236 (ELWYTEKQTK…GLWTFTIGSK (234 aa)) enclose the PABS domain. S-methyl-5'-thioadenosine is bound at residue glutamine 32. The spermidine site is built by histidine 63 and aspartate 87. Residues aspartate 107 and 138 to 139 (DG) contribute to the S-methyl-5'-thioadenosine site. The active-site Proton acceptor is the aspartate 156. 156–159 (DSTE) is a spermidine binding site. Proline 163 contributes to the S-methyl-5'-thioadenosine binding site.

Belongs to the spermidine/spermine synthase family. In terms of assembly, homodimer or homotetramer.

The protein localises to the cytoplasm. It catalyses the reaction S-adenosyl 3-(methylsulfanyl)propylamine + putrescine = S-methyl-5'-thioadenosine + spermidine + H(+). Its pathway is amine and polyamine biosynthesis; spermidine biosynthesis; spermidine from putrescine: step 1/1. Functionally, involved in the cell growth and proliferation. Catalyzes the irreversible transfer of a propylamine group from the amino donor S-adenosylmethioninamine (decarboxy-AdoMet) to putrescine (1,4-diaminobutane) to yield spermidine. The sequence is that of Polyamine aminopropyltransferase from Bacillus subtilis (strain 168).